The following is a 133-amino-acid chain: uncharacterized protein (133 aa).

The 120-residue stretch at 9–128 folds into the Response regulatory domain; sequence RILVYSDNVQ…VLGRTVLSLL (120 aa). Residue Asp64 is modified to 4-aspartylphosphate.

This is an uncharacterized protein from Mycobacterium tuberculosis (strain CDC 1551 / Oshkosh).